The sequence spans 839 residues: Dynein axonemal assembly factor 5 (839 aa).

HEAT repeat units follow at residues 10–48, 54–92, 94–137, 140–178, 181–219, 221–257, 259–297, 578–617, 675–713, 717–755, and 723–761; these read TSDV…DEKL, QHVF…HVPR, EEAL…VCGK, APYL…CIPE, HMQA…YSSG, SVDD…KLQD, YSFF…QWEK, GETL…KASE, LQVE…TCER, PDKL…CITD, and IYPE…ERTT.

It belongs to the DNAAF5 family. As to quaternary structure, interacts with DNAI2; probably involved in outer arm dynein assembly.

The protein resides in the cytoplasm. It is found in the dynein axonemal particle. Its function is as follows. Cytoplasmic protein involved in the delivery of the dynein machinery to the motile cilium. It is required for the assembly of the axonemal dynein inner and outer arms, two structures attached to the peripheral outer doublet A microtubule of the axoneme, that play a crucial role in cilium motility. In Xenopus laevis (African clawed frog), this protein is Dynein axonemal assembly factor 5.